The primary structure comprises 416 residues: CinA-like protein (416 aa).

This sequence belongs to the CinA family.

This Trichormus variabilis (strain ATCC 29413 / PCC 7937) (Anabaena variabilis) protein is CinA-like protein.